We begin with the raw amino-acid sequence, 183 residues long: Inner membrane-spanning protein YciB (183 aa).

A run of 5 helical transmembrane segments spans residues 22–44 (IYTA…WVRY), 54–74 (TFLL…DAFI), 76–96 (WKVT…RYGF), 119–139 (VNLA…YVAF), and 149–169 (FKVF…GVYL).

The protein belongs to the YciB family.

Its subcellular location is the cell inner membrane. Plays a role in cell envelope biogenesis, maintenance of cell envelope integrity and membrane homeostasis. The chain is Inner membrane-spanning protein YciB from Aeromonas salmonicida (strain A449).